We begin with the raw amino-acid sequence, 579 residues long: Tetratricopeptide repeat protein 39C (579 aa).

A compositionally biased stretch (polar residues) spans 182–197 (QQGALASDQANHNTST). Residues 182 to 202 (QQGALASDQANHNTSTGSGGR) form a disordered region. 3 TPR repeats span residues 311 to 344 (SLFI…ASDQ), 349 to 382 (HVCL…SRWS), and 481 to 514 (GLKH…EYGR).

The protein belongs to the TTC39 family.

This Danio rerio (Zebrafish) protein is Tetratricopeptide repeat protein 39C (ttc39c).